Consider the following 1003-residue polypeptide: Phosphatidylinositol 4,5-bisphosphate 5-phosphatase A (1003 aa).

Disordered regions lie at residues 1-110 and 147-414; these read MEGQ…AAKS and AMPR…QPTC. Positions 6-11 match the RSXSXX motif 1 motif; sequence RSGSAR. The span at 11–24 shows a compositional bias: low complexity; that stretch reads RPGTRTGLGPLPGT. The residue at position 56 (R56) is an Asymmetric dimethylarginine; alternate. R56 bears the Omega-N-methylarginine; alternate mark. R65 is subject to Omega-N-methylarginine. R76 is modified (asymmetric dimethylarginine). R83 carries the asymmetric dimethylarginine; alternate modification. At R83 the chain carries Omega-N-methylarginine; alternate. The span at 160 to 174 shows a compositional bias: polar residues; the sequence is LTPTSRDQKQLSPTS. S171 carries the phosphoserine modification. The span at 180–196 shows a compositional bias: low complexity; that stretch reads ALATSGLSLALASQEQP. The span at 197–210 shows a compositional bias: pro residues; sequence PQSPSSPSPVPSPV. Over residues 284-294 the composition is skewed to basic and acidic residues; the sequence is ARPEAPRHSPE. Phosphoserine is present on residues S292 and S325. Residues 338–348 are compositionally biased toward pro residues; that stretch reads VPPPLPKPPRS. The short motif at 346 to 351 is the SH3-binding element; the sequence is PRSPSR. 2 stretches are compositionally biased toward low complexity: residues 349 to 361 and 390 to 413; these read PSRS…NRSP and QAQE…AQPT. Residues 351 to 356 carry the RSXSXX motif 2 motif; it reads RSPSRS. A catalytic region spans residues 422–725; it reads ITVVTWNVGT…SDHKPVAAQF (304 aa). Positions 726–837 are required for ruffle localization; it reads ILQFAFRDDV…IGVTEPFQIS (112 aa). The disordered stretch occupies residues 839–1003; it reads PTSESASSST…LGLEEGGLGP (165 aa). Residues 840–855 are compositionally biased toward low complexity; that stretch reads TSESASSSTDSSGTSS. 2 consecutive short sequence motifs (RSXSXX motif) follow at residues 871–876 and 882–887; these read RSPSPG and RSRSPG. The residue at position 900 (S900) is a Phosphoserine. Composition is skewed to low complexity over residues 907–919 and 927–943; these read SRSP…QLPR and SSSS…GLPG. The RSXSXX motif 5 signature appears at 908–913; it reads RSPSPQ. S987 is modified (phosphoserine).

The protein belongs to the inositol 1,4,5-trisphosphate 5-phosphatase type II family.

It is found in the cytoplasm. It catalyses the reaction 1D-myo-inositol 1,4,5-trisphosphate + H2O = 1D-myo-inositol 1,4-bisphosphate + phosphate. The enzyme catalyses 1D-myo-inositol 1,3,4,5-tetrakisphosphate + H2O = 1D-myo-inositol 1,3,4-trisphosphate + phosphate. It carries out the reaction a 1,2-diacyl-sn-glycero-3-phospho-(1D-myo-inositol-4,5-bisphosphate) + H2O = a 1,2-diacyl-sn-glycero-3-phospho-(1D-myo-inositol 4-phosphate) + phosphate. Its function is as follows. Inositol 5-phosphatase, which converts inositol 1,4,5-trisphosphate to inositol 1,4-bisphosphate. Also converts phosphatidylinositol 4,5-bisphosphate to phosphatidylinositol 4-phosphate and inositol 1,3,4,5-tetrakisphosphate to inositol 1,3,4-trisphosphate in vitro. May be involved in modulation of the function of inositol and phosphatidylinositol polyphosphate-binding proteins that are present at membranes ruffles. This chain is Phosphatidylinositol 4,5-bisphosphate 5-phosphatase A (Inpp5j), found in Mus musculus (Mouse).